Reading from the N-terminus, the 140-residue chain is Phosphoribosyl-AMP cyclohydrolase (140 aa).

Mg(2+) is bound at residue D85. C86 is a binding site for Zn(2+). Residues D87 and D89 each coordinate Mg(2+). Zn(2+) contacts are provided by C102 and C109.

This sequence belongs to the PRA-CH family. As to quaternary structure, homodimer. Mg(2+) serves as cofactor. Zn(2+) is required as a cofactor.

It localises to the cytoplasm. It catalyses the reaction 1-(5-phospho-beta-D-ribosyl)-5'-AMP + H2O = 1-(5-phospho-beta-D-ribosyl)-5-[(5-phospho-beta-D-ribosylamino)methylideneamino]imidazole-4-carboxamide. Its pathway is amino-acid biosynthesis; L-histidine biosynthesis; L-histidine from 5-phospho-alpha-D-ribose 1-diphosphate: step 3/9. Functionally, catalyzes the hydrolysis of the adenine ring of phosphoribosyl-AMP. The polypeptide is Phosphoribosyl-AMP cyclohydrolase (Bradyrhizobium diazoefficiens (strain JCM 10833 / BCRC 13528 / IAM 13628 / NBRC 14792 / USDA 110)).